A 232-amino-acid polypeptide reads, in one-letter code: UPF0758 protein BH3032 (232 aa).

The MPN domain maps to 107-229; sequence VIRTPEDVSR…FVSLKEKGHL (123 aa). Positions 178, 180, and 191 each coordinate Zn(2+). Positions 178 to 191 match the JAMM motif motif; it reads HNHPSGDPTPSRED.

Belongs to the UPF0758 family.

This Halalkalibacterium halodurans (strain ATCC BAA-125 / DSM 18197 / FERM 7344 / JCM 9153 / C-125) (Bacillus halodurans) protein is UPF0758 protein BH3032.